The chain runs to 338 residues: Sesquiterpene synthase 1 (338 aa).

Mg(2+) contacts are provided by D93, N228, S232, and E236. Positions 93–97 (DNISD) match the DDXXD motif motif. The short motif at 228-236 (NDIFSYNVE) is the NSE/DTE motif element. 2 residues coordinate (2E,6E)-farnesyl diphosphate: R316 and Y317.

The protein belongs to the terpene synthase family. The cofactor is Mg(2+).

The enzyme catalyses (2E,6E)-farnesyl diphosphate = alpha-copaene + diphosphate. It catalyses the reaction (2E,6E)-farnesyl diphosphate = beta-copaene + diphosphate. The catalysed reaction is (2E,6E)-farnesyl diphosphate = alpha-muurolene + diphosphate. It carries out the reaction (2E,6E)-farnesyl diphosphate = gamma-muurolene + diphosphate. The enzyme catalyses (2E,6E)-farnesyl diphosphate = delta-cadinene + diphosphate. Terpene cyclase that catalyzes the cyclization of farnesyl diphosphate (FPP) to various sesquiterpenes, including alpha-copaene, beta-copaene, beta-elemene, alpha-muurolene, gamma-muurolene and delta-cadinene. This is Sesquiterpene synthase 1 from Postia placenta (strain ATCC 44394 / Madison 698-R) (Brown rot fungus).